The chain runs to 156 residues: Ribosomal RNA large subunit methyltransferase H (156 aa).

S-adenosyl-L-methionine-binding positions include Leu-73, Gly-104, and 123-128 (LSPLTL).

It belongs to the RNA methyltransferase RlmH family. In terms of assembly, homodimer.

It is found in the cytoplasm. It catalyses the reaction pseudouridine(1915) in 23S rRNA + S-adenosyl-L-methionine = N(3)-methylpseudouridine(1915) in 23S rRNA + S-adenosyl-L-homocysteine + H(+). In terms of biological role, specifically methylates the pseudouridine at position 1915 (m3Psi1915) in 23S rRNA. This chain is Ribosomal RNA large subunit methyltransferase H, found in Serratia proteamaculans (strain 568).